A 119-amino-acid chain; its full sequence is Protein TusC (119 aa).

It belongs to the DsrF/TusC family. Heterohexamer, formed by a dimer of trimers. The hexameric TusBCD complex contains 2 copies each of TusB, TusC and TusD. The TusBCD complex interacts with TusE.

Its subcellular location is the cytoplasm. Part of a sulfur-relay system required for 2-thiolation of 5-methylaminomethyl-2-thiouridine (mnm(5)s(2)U) at tRNA wobble positions. The chain is Protein TusC from Shigella boydii serotype 18 (strain CDC 3083-94 / BS512).